Consider the following 228-residue polypeptide: Urease accessory protein UreF (228 aa).

This sequence belongs to the UreF family. UreD, UreF and UreG form a complex that acts as a GTP-hydrolysis-dependent molecular chaperone, activating the urease apoprotein by helping to assemble the nickel containing metallocenter of UreC. The UreE protein probably delivers the nickel.

Its subcellular location is the cytoplasm. Required for maturation of urease via the functional incorporation of the urease nickel metallocenter. This is Urease accessory protein UreF from Dechloromonas aromatica (strain RCB).